The sequence spans 216 residues: Imidazole glycerol phosphate synthase subunit HisH 1 (216 aa).

Positions 4–216 (CVLIVDAGLG…LQNFIALNPC (213 aa)) constitute a Glutamine amidotransferase type-1 domain. Catalysis depends on C84, which acts as the Nucleophile. Catalysis depends on residues H195 and E197.

As to quaternary structure, heterodimer of HisH and HisF.

Its subcellular location is the cytoplasm. The catalysed reaction is 5-[(5-phospho-1-deoxy-D-ribulos-1-ylimino)methylamino]-1-(5-phospho-beta-D-ribosyl)imidazole-4-carboxamide + L-glutamine = D-erythro-1-(imidazol-4-yl)glycerol 3-phosphate + 5-amino-1-(5-phospho-beta-D-ribosyl)imidazole-4-carboxamide + L-glutamate + H(+). It catalyses the reaction L-glutamine + H2O = L-glutamate + NH4(+). It participates in amino-acid biosynthesis; L-histidine biosynthesis; L-histidine from 5-phospho-alpha-D-ribose 1-diphosphate: step 5/9. Its function is as follows. IGPS catalyzes the conversion of PRFAR and glutamine to IGP, AICAR and glutamate. The HisH subunit provides the glutamine amidotransferase activity that produces the ammonia necessary to HisF for the synthesis of IGP and AICAR. This chain is Imidazole glycerol phosphate synthase subunit HisH 1 (hisH1), found in Prochlorococcus marinus (strain MIT 9313).